We begin with the raw amino-acid sequence, 355 residues long: MSLFDTINAGGAQLLGVAWPTVWALVRILVVAVVILLCVAYLILWERKLIGWMHVRLGPNRVGPAGLLQPIADVLKLLLKEVIQPSAASRWLYLVAPVMTVVPAFAVWAVIPFQAQAVLANVNAGLLYAMAISSIGVYAVILAGWASNSKYAFLGAMRAAAQMVSYEISMGFALVLVLMTAGSLNLSEIVGSQQHGFFAGHGVNFLSWNWLPLLPAFVVYFVSGIAETNRHPFDVVEGESEIVAGHMIDYSGMAFALFFLAEYINMIVISALAATLFLGGWDAPFEFLSFIPGIFWLVLKVFALLSVFIWVRATFPRYRYDQIMRLGWKVFLPVTVIWVVVVGFWMMSPLNIWVK.

A run of 8 helical transmembrane segments spans residues 25–45 (LVRILVVAVVILLCVAYLILW), 91–111 (WLYLVAPVMTVVPAFAVWAVI), 126–146 (LLYAMAISSIGVYAVILAGWA), 170–190 (MGFALVLVLMTAGSLNLSEIV), 205–225 (FLSWNWLPLLPAFVVYFVSGI), 253–273 (MAFALFFLAEYINMIVISALA), 290–310 (FIPGIFWLVLKVFALLSVFIW), and 330–350 (VFLPVTVIWVVVVGFWMMSPL).

Belongs to the complex I subunit 1 family. NDH-1 is composed of 14 different subunits. Subunits NuoA, H, J, K, L, M, N constitute the membrane sector of the complex.

It localises to the cell inner membrane. The catalysed reaction is a quinone + NADH + 5 H(+)(in) = a quinol + NAD(+) + 4 H(+)(out). Its function is as follows. NDH-1 shuttles electrons from NADH, via FMN and iron-sulfur (Fe-S) centers, to quinones in the respiratory chain. The immediate electron acceptor for the enzyme in this species is believed to be ubiquinone. Couples the redox reaction to proton translocation (for every two electrons transferred, four hydrogen ions are translocated across the cytoplasmic membrane), and thus conserves the redox energy in a proton gradient. This subunit may bind ubiquinone. The polypeptide is NADH-quinone oxidoreductase subunit H (Burkholderia vietnamiensis (strain G4 / LMG 22486) (Burkholderia cepacia (strain R1808))).